The chain runs to 386 residues: Nucleosome assembly protein 1-like 4 (386 aa).

Residues 1 to 28 (MAENSLSDGGPADSVEAAKNASNTEKLT) are disordered. Position 2 is an N-acetylalanine (A2). Phosphoserine occurs at positions 5, 7, and 49. T51 carries the phosphothreonine modification. Residues S53 and S54 each carry the phosphoserine modification. At T58 the chain carries Phosphothreonine. N6-acetyllysine is present on K105. Position 125 is a phosphoserine (S125). An N6-acetyllysine modification is found at K146. A Nuclear localization signal motif is present at residues 265-271 (IKKKQKH). Residue S304 is modified to Phosphoserine. Residues 339–370 (AIEDDDNFEEGEEGEEEELEGDEEGEDEDDAD) are compositionally biased toward acidic residues. The interval 339 to 386 (AIEDDDNFEEGEEGEEEELEGDEEGEDEDDADVNPKKEPIQPAECKQQ) is disordered.

The protein belongs to the nucleosome assembly protein (NAP) family. Interacts with core (H2A, H2B, H3, H4) and linker (H1) histones. In terms of processing, polyglutamylated and polyglycylated. These 2 modifications occur exclusively on glutamate residues and result in either polyglutamate or polyglycine chains on the gamma-carboxyl group. Both modifications can coexist on the same protein on adjacent residues, and lowering polyglycylation levels increases polyglutamylation, and reciprocally. Polyglutamylated by TTLL4. Phosphorylated at the G0/G1 boundary but it is not phosphorylated in S-phase. Phosphorylated protein remains in the cytoplasm in a complex with histones during the G0/G1 transition, whereas dephosphorylation triggers its transport into the nucleus at the G1/S-boundary.

The protein localises to the nucleus. It localises to the cytoplasm. Functionally, acts as a histone chaperone in nucleosome assembly. This is Nucleosome assembly protein 1-like 4 (Nap1l4) from Rattus norvegicus (Rat).